The following is a 356-amino-acid chain: Methionine import ATP-binding protein MetN 1 (356 aa).

The 240-residue stretch at Ile15–Leu254 folds into the ABC transporter domain. Gly51 to Ser58 serves as a coordination point for ATP.

This sequence belongs to the ABC transporter superfamily. Methionine importer (TC 3.A.1.24) family. As to quaternary structure, the complex is composed of two ATP-binding proteins (MetN), two transmembrane proteins (MetI) and a solute-binding protein (MetQ).

The protein resides in the cell inner membrane. It catalyses the reaction L-methionine(out) + ATP + H2O = L-methionine(in) + ADP + phosphate + H(+). The catalysed reaction is D-methionine(out) + ATP + H2O = D-methionine(in) + ADP + phosphate + H(+). Functionally, part of the ABC transporter complex MetNIQ involved in methionine import. Responsible for energy coupling to the transport system. The chain is Methionine import ATP-binding protein MetN 1 from Acinetobacter baylyi (strain ATCC 33305 / BD413 / ADP1).